The chain runs to 117 residues: MDDDFLFMTLLYDFYGALLTDKQREIFEMYYLNDYSLGEISELLDISRQGVYDTLKRAESSLEFFEEKLGLVKRHQEIMNKLDKIKKGIEIIRERERDPEILKIIEEIAREIEELNL.

It belongs to the UPF0122 family.

Might take part in the signal recognition particle (SRP) pathway. This is inferred from the conservation of its genetic proximity to ftsY/ffh. May be a regulatory protein. This chain is UPF0122 protein Teth514_1714, found in Thermoanaerobacter sp. (strain X514).